Consider the following 205-residue polypeptide: Glycerol-3-phosphate acyltransferase (205 aa).

Residues 1–3 (MSA) lie on the Periplasmic side of the membrane. A helical membrane pass occupies residues 4–24 (IAPGMILFAYLCGSISSAILV). Residues 25–52 (CRIAGLPDPRESGSGNPGATNVLRIGGK) lie on the Cytoplasmic side of the membrane. The chain crosses the membrane as a helical span at residues 53 to 73 (GAAVAVLIFDILKGMLPVWGA). The Periplasmic portion of the chain corresponds to 74-80 (YALGITP). A helical transmembrane segment spans residues 81–101 (FWLGLIAIAACLGHIWPVFFG). The Cytoplasmic portion of the chain corresponds to 102–111 (FKGGKGVATA). A helical transmembrane segment spans residues 112–132 (FGAIAPIGWDLTGVIAGTWLL). At 133-137 (TVLLS) the chain is on the periplasmic side. Residues 138-158 (GYSSLGAIVSALIAPFYVWWF) traverse the membrane as a helical segment. At 159–205 (KPQFTFPVSMLSCLILLRHHDNIQRLWRRQETKIWTKLKKKREKESK) the chain is on the cytoplasmic side.

The protein belongs to the PlsY family. Probably interacts with PlsX.

The protein localises to the cell inner membrane. The catalysed reaction is sn-glycerol 3-phosphate + an acyl-CoA = a 1-acyl-sn-glycero-3-phosphate + CoA. It catalyses the reaction a fatty acyl-[ACP] + sn-glycerol 3-phosphate = a 1-acyl-sn-glycero-3-phosphate + holo-[ACP]. Its pathway is lipid metabolism; phospholipid metabolism. Catalyzes the transfer of an acyl group from acyl-ACP to glycerol-3-phosphate (G3P) to form lysophosphatidic acid (LPA). This enzyme can also utilize acyl-CoA as fatty acyl donor, but not acyl-PO(4). The sequence is that of Glycerol-3-phosphate acyltransferase from Salmonella arizonae (strain ATCC BAA-731 / CDC346-86 / RSK2980).